The following is a 351-amino-acid chain: uncharacterized protein (351 aa).

The region spanning 14–69 (PRLADIAAQAQVSEATASRVLNGRPASRXSTRQRVLAALDLLGYERPTRLRRRSAG) is the HTH lacI-type domain. Positions 16–35 (LADIAAQAQVSEATASRVLN) form a DNA-binding region, H-T-H motif.

Functionally, putative sugar-binding regulatory protein for the alpha-amylase gene. This is an uncharacterized protein from Streptomyces limosus (Streptomyces albidoflavus).